The following is a 263-amino-acid chain: Methylesterase 1 (263 aa).

S85 functions as the Acyl-ester intermediate in the catalytic mechanism. Active-site charge relay system residues include D213 and H241.

It belongs to the AB hydrolase superfamily. Methylesterase family.

The catalysed reaction is methyl (indol-3-yl)acetate + H2O = (indol-3-yl)acetate + methanol + H(+). The enzyme catalyses methyl (-)-jasmonate + H2O = jasmonate + methanol + H(+). It carries out the reaction methyl salicylate + H2O = salicylate + methanol + H(+). Its pathway is plant hormone biosynthesis. It participates in lipid metabolism; oxylipin biosynthesis. Esterase activity is down-regulated by salicylic acid (SA). Methylesterase shown to have carboxylesterase activity, methyl indole-3-acetic acid (MeIAA) esterase activity, methyl salicylate (MeSA) esterase activity and methyl jasmonate (MeJA) esterase activity in vitro. Required to convert methyl salicylate (MeSA) to salicylic acid (SA) as part of the signal transduction pathways that activate systemic acquired resistance in systemic tissue. MeSA is believed to be an inactive form that needs to be demethylated to exert a biological effect. This is Methylesterase 1 from Arabidopsis thaliana (Mouse-ear cress).